Here is a 90-residue protein sequence, read N- to C-terminus: MANTKSAEKRIRANARRALRNKMYRSRVKTAIKKAERAIFAGTPNAELVREAMSLLDRAAVKGIIHKNNAARRKSRLAKKFAKATAASPS.

This sequence belongs to the bacterial ribosomal protein bS20 family.

Binds directly to 16S ribosomal RNA. The sequence is that of Small ribosomal subunit protein bS20 from Roseiflexus sp. (strain RS-1).